Here is a 375-residue protein sequence, read N- to C-terminus: Probable butyrate kinase 2 (375 aa).

It belongs to the acetokinase family.

The protein resides in the cytoplasm. The catalysed reaction is butanoate + ATP = butanoyl phosphate + ADP. This chain is Probable butyrate kinase 2, found in Thermotoga maritima (strain ATCC 43589 / DSM 3109 / JCM 10099 / NBRC 100826 / MSB8).